The chain runs to 333 residues: MNIAAKPPLTIRLCGPRGFCAGVDRAIQIVVLALKSYGAPVYVRHEIVHNRYVVEGLEAKGAVFVEELDEIPAEHRAQPVVFSAHGVPKSVPEDAASRNLFYLDATCPLVSKVHKQAMRHNRLGRHVVLIGHAGHPEVIGTMGQLPEGSVSLIETIEDADAYVPVDPDNLGYVTQTTLSVDDTAGVITRLHERFPNLTAPAADSICYATTNRQEVVKQAAPGCDLFIIVGAPNSSNSKRLVEVALRAGAKKSILVQRAAELDWDEIGAISTLGLSAGASAPEVIVNEIIEAFRARFDARVELAETVQETENFLVNRELRNIELTAADMAFVNG.

A [4Fe-4S] cluster-binding site is contributed by C20. (2E)-4-hydroxy-3-methylbut-2-enyl diphosphate is bound by residues H49 and H85. Residues H49 and H85 each contribute to the dimethylallyl diphosphate site. Isopentenyl diphosphate contacts are provided by H49 and H85. Position 107 (C107) interacts with [4Fe-4S] cluster. H135 provides a ligand contact to (2E)-4-hydroxy-3-methylbut-2-enyl diphosphate. H135 lines the dimethylallyl diphosphate pocket. An isopentenyl diphosphate-binding site is contributed by H135. E137 (proton donor) is an active-site residue. T176 contacts (2E)-4-hydroxy-3-methylbut-2-enyl diphosphate. Residue C206 coordinates [4Fe-4S] cluster. Residues S234, S235, N236, and S279 each contribute to the (2E)-4-hydroxy-3-methylbut-2-enyl diphosphate site. Residues S234, S235, N236, and S279 each contribute to the dimethylallyl diphosphate site. Isopentenyl diphosphate contacts are provided by S234, S235, N236, and S279.

It belongs to the IspH family. The cofactor is [4Fe-4S] cluster.

It carries out the reaction isopentenyl diphosphate + 2 oxidized [2Fe-2S]-[ferredoxin] + H2O = (2E)-4-hydroxy-3-methylbut-2-enyl diphosphate + 2 reduced [2Fe-2S]-[ferredoxin] + 2 H(+). The catalysed reaction is dimethylallyl diphosphate + 2 oxidized [2Fe-2S]-[ferredoxin] + H2O = (2E)-4-hydroxy-3-methylbut-2-enyl diphosphate + 2 reduced [2Fe-2S]-[ferredoxin] + 2 H(+). Its pathway is isoprenoid biosynthesis; dimethylallyl diphosphate biosynthesis; dimethylallyl diphosphate from (2E)-4-hydroxy-3-methylbutenyl diphosphate: step 1/1. It participates in isoprenoid biosynthesis; isopentenyl diphosphate biosynthesis via DXP pathway; isopentenyl diphosphate from 1-deoxy-D-xylulose 5-phosphate: step 6/6. Functionally, catalyzes the conversion of 1-hydroxy-2-methyl-2-(E)-butenyl 4-diphosphate (HMBPP) into a mixture of isopentenyl diphosphate (IPP) and dimethylallyl diphosphate (DMAPP). Acts in the terminal step of the DOXP/MEP pathway for isoprenoid precursor biosynthesis. This is 4-hydroxy-3-methylbut-2-enyl diphosphate reductase from Rhizobium johnstonii (strain DSM 114642 / LMG 32736 / 3841) (Rhizobium leguminosarum bv. viciae).